Here is a 211-residue protein sequence, read N- to C-terminus: Large ribosomal subunit protein uL3 (211 aa).

The span at 130 to 139 shows a compositional bias: polar residues; sequence QDATHGNSLS. The segment at 130 to 151 is disordered; the sequence is QDATHGNSLSHRAPGSIGQNQT. An N5-methylglutamine modification is found at Gln-150.

The protein belongs to the universal ribosomal protein uL3 family. In terms of assembly, part of the 50S ribosomal subunit. Forms a cluster with proteins L14 and L19. Methylated by PrmB.

Its function is as follows. One of the primary rRNA binding proteins, it binds directly near the 3'-end of the 23S rRNA, where it nucleates assembly of the 50S subunit. In Alcanivorax borkumensis (strain ATCC 700651 / DSM 11573 / NCIMB 13689 / SK2), this protein is Large ribosomal subunit protein uL3.